Consider the following 287-residue polypeptide: Seed leukoagglutinin (287 aa).

A signal peptide spans 1–29; it reads MATSNSKPTQVLLATFLTFFFLLLNNVNS. N-acetyl-alpha-neuraminyl-(2-&gt;3)-beta-D-galactosyl-(1-&gt;4)-beta-D-glucose is bound at residue Y74. N90 carries N-linked (GlcNAc...) (paucimannose) asparagine glycosylation. The N-acetyl-alpha-neuraminyl-(2-&gt;3)-beta-D-galactosyl-(1-&gt;4)-beta-D-glucose site is built by D116, S133, and K136. N-linked (GlcNAc...) (paucimannose) asparagine glycosylation is present at N142. Residues E156 and D158 each coordinate Mn(2+). Ca(2+)-binding residues include D158, Y160, D166, and D169. Y160 and D166 together coordinate N-acetyl-alpha-neuraminyl-(2-&gt;3)-beta-D-galactosyl-(1-&gt;4)-beta-D-glucose. Positions 169 and 174 each coordinate Mn(2+). N208 carries N-linked (GlcNAc...) (high mannose) asparagine; partial glycosylation. N-linked (GlcNAc...) (paucimannose) asparagine; partial glycosylation is present at N220. Position 253 (E253) interacts with N-acetyl-alpha-neuraminyl-(2-&gt;3)-beta-D-galactosyl-(1-&gt;4)-beta-D-glucose. Residues 279–287 constitute a propeptide, removed in mature form; it reads NVHIARYTA.

Belongs to the leguminous lectin family. In terms of assembly, homodimer; disulfide-linked. Dimer of homodimers. In terms of processing, the glycosylation on N-90 is determined to by of the high mannose type in PubMed:26003537, while PubMed:27720757 found a paucimannose at this position. Post-translationally, processed at its C-terminus.

Its function is as follows. Sialic acid-binding lectin recognizing oligosaccharides containing terminal sialic acid linked via alpha-2,3 bond to penultimate galactose residues. Binds the trisaccharide sequence Neu5Ac-alpha-2,3-Gal-beta-1,4-GlcNAc. Binds fetuin when fully glycosylated but not when the high mannose-type glycans are removed, although the secondary structure is virtually unaffected by deglycosylation of the high mannose-type glycans. The lectin activity may depend on the presence of a single GlcNAc attached to N-90. This is Seed leukoagglutinin from Maackia amurensis (Amur maackia).